We begin with the raw amino-acid sequence, 498 residues long: Protein YhjJ (498 aa).

The first 24 residues, 1–24 (MQGTKIRLLAGGLLMMATAGYVQA), serve as a signal peptide directing secretion.

It belongs to the peptidase M16 family.

It localises to the periplasm. This chain is Protein YhjJ (yhjJ), found in Escherichia coli (strain K12).